The primary structure comprises 478 residues: Protein nucleotidyltransferase YdiU (478 aa).

Residues Gly-84, Gly-86, Arg-87, Lys-107, Asp-119, Gly-120, Arg-170, and Arg-177 each contribute to the ATP site. Asp-246 (proton acceptor) is an active-site residue. The Mg(2+) site is built by Asn-247 and Asp-256. Residue Asp-256 coordinates ATP.

It belongs to the SELO family. It depends on Mg(2+) as a cofactor. The cofactor is Mn(2+).

It carries out the reaction L-seryl-[protein] + ATP = 3-O-(5'-adenylyl)-L-seryl-[protein] + diphosphate. It catalyses the reaction L-threonyl-[protein] + ATP = 3-O-(5'-adenylyl)-L-threonyl-[protein] + diphosphate. The catalysed reaction is L-tyrosyl-[protein] + ATP = O-(5'-adenylyl)-L-tyrosyl-[protein] + diphosphate. The enzyme catalyses L-histidyl-[protein] + UTP = N(tele)-(5'-uridylyl)-L-histidyl-[protein] + diphosphate. It carries out the reaction L-seryl-[protein] + UTP = O-(5'-uridylyl)-L-seryl-[protein] + diphosphate. It catalyses the reaction L-tyrosyl-[protein] + UTP = O-(5'-uridylyl)-L-tyrosyl-[protein] + diphosphate. Nucleotidyltransferase involved in the post-translational modification of proteins. It can catalyze the addition of adenosine monophosphate (AMP) or uridine monophosphate (UMP) to a protein, resulting in modifications known as AMPylation and UMPylation. This Shigella boydii serotype 4 (strain Sb227) protein is Protein nucleotidyltransferase YdiU.